The primary structure comprises 433 residues: 3-phosphoshikimate 1-carboxyvinyltransferase (433 aa).

Positions 23, 24, and 28 each coordinate 3-phosphoshikimate. Lys23 is a binding site for phosphoenolpyruvate. Positions 95 and 123 each coordinate phosphoenolpyruvate. 6 residues coordinate 3-phosphoshikimate: Ser170, Ser171, Gln172, Ser198, Asp317, and Lys344. Gln172 serves as a coordination point for phosphoenolpyruvate. The active-site Proton acceptor is Asp317. The phosphoenolpyruvate site is built by Arg348, Arg391, and Lys416.

This sequence belongs to the EPSP synthase family. In terms of assembly, monomer.

The protein resides in the cytoplasm. It carries out the reaction 3-phosphoshikimate + phosphoenolpyruvate = 5-O-(1-carboxyvinyl)-3-phosphoshikimate + phosphate. It participates in metabolic intermediate biosynthesis; chorismate biosynthesis; chorismate from D-erythrose 4-phosphate and phosphoenolpyruvate: step 6/7. Its function is as follows. Catalyzes the transfer of the enolpyruvyl moiety of phosphoenolpyruvate (PEP) to the 5-hydroxyl of shikimate-3-phosphate (S3P) to produce enolpyruvyl shikimate-3-phosphate and inorganic phosphate. This Neisseria meningitidis serogroup C / serotype 2a (strain ATCC 700532 / DSM 15464 / FAM18) protein is 3-phosphoshikimate 1-carboxyvinyltransferase.